Here is a 203-residue protein sequence, read N- to C-terminus: SPbeta prophage-derived uncharacterized protein YouA (203 aa).

The disordered stretch occupies residues 1 to 23 (MAFLNQDGDKYTSAKDDGTGNPI). Positions 7 to 18 (DGDKYTSAKDDG) are enriched in basic and acidic residues.

The protein is SPbeta prophage-derived uncharacterized protein YouA (youA) of Bacillus subtilis (strain 168).